A 224-amino-acid chain; its full sequence is PKHD-type hydroxylase tll1907 (224 aa).

The 100-residue stretch at 77 to 176 (KIIGPLLFSR…RLVAVAWVQS (100 aa)) folds into the Fe2OG dioxygenase domain. 3 residues coordinate Fe cation: His-96, Asp-98, and His-157. Arg-167 serves as a coordination point for 2-oxoglutarate.

The cofactor is Fe(2+). Requires L-ascorbate as cofactor.

The polypeptide is PKHD-type hydroxylase tll1907 (Thermosynechococcus vestitus (strain NIES-2133 / IAM M-273 / BP-1)).